A 377-amino-acid chain; its full sequence is RIB43A-like with coiled-coils protein 2 (377 aa).

Coiled coils occupy residues Asn217–Asp250 and Glu282–Asp308.

It belongs to the RIB43A family. As to quaternary structure, microtubule inner protein component of sperm flagellar doublet microtubules. Expressed in trachea multiciliated cells.

The protein localises to the cytoplasm. It localises to the cytoskeleton. Its subcellular location is the cilium axoneme. It is found in the flagellum axoneme. Functionally, microtubule inner protein (MIP) part of the dynein-decorated doublet microtubules (DMTs) in cilia axoneme, which is required for motile cilia beating. In Bos taurus (Bovine), this protein is RIB43A-like with coiled-coils protein 2.